A 369-amino-acid chain; its full sequence is MAPIKTAVLGTGMSAFIFHYPFLKALPNHFEVYAAWERRATSTESKARAAFPNVKVYTKLDELLADSNIELVVISLPPNVHYEVVSQALNAGKHVLCEKPFTPTYGEAKELFDLAKSKNLMLTVYQNRRFDGDFLTAKECIENGRLGEVVQFESHIDRFRLFRKGNWKDVPNPGCGLVYDLGSHLIDQAITLFGTPHSVTAKLESQRQIPPLEVEDCFRIVLHYLPQEGRLPLDVIVCSSSISCGLDMRYIIKGTRGSFLKFGIDPQESQLNEGMSPMDPGYGVDSSHHYATLWTLPPDIDVRHPPKPTKSTLMTIAGDYRRFYLEVHEALVTKTFETSVKPHQVLLVEKIIEAAYKSSQSSTSIPLSE.

This sequence belongs to the Gfo/Idh/MocA family.

This is an uncharacterized protein from Schizosaccharomyces pombe (strain 972 / ATCC 24843) (Fission yeast).